Here is a 91-residue protein sequence, read N- to C-terminus: Bacterial microcompartment shell protein PduJ (91 aa).

The 85-residue stretch at 4–88 (ALGLVETKGL…PHSDVEAILP (85 aa)) folds into the BMC domain.

The protein belongs to the bacterial microcompartments protein family. Homohexamer with a central pore. Interacts with PduP, which targets PduP to the BMC. Interacts with shell protein PduA.

Its subcellular location is the bacterial microcompartment. It functions in the pathway polyol metabolism; 1,2-propanediol degradation. One of the major shell proteins of the bacterial microcompartment (BMC) dedicated to 1,2-propanediol (1,2-PD) degradation. At least one of PduA or PduJ is required for BMC assembly; it must be encoded as the first gene in the pdu operon. Required for structural integrity of BMCs and to mitigate propionaldehyde toxicity, probably joins facets responsible for BMC closure. Probably the hub for binding multiple enzymes to the interior of the BMC. In terms of biological role, expression of a cosmid containing the full 21-gene pdu operon in E.coli allows E.coli to grow on 1,2-PD with the appearance of BMCs in its cytoplasm. Overexpression of this protein leads to an internal structure with a whorled architecture. Functionally, the 1,2-PD-specific bacterial microcompartment (BMC) concentrates low levels of 1,2-PD catabolic enzymes, concentrates volatile reaction intermediates thus enhancing pathway flux and keeps the level of toxic, mutagenic propionaldehyde low. In Citrobacter freundii, this protein is Bacterial microcompartment shell protein PduJ.